The sequence spans 437 residues: Trigger factor (437 aa).

One can recognise a PPIase FKBP-type domain in the interval serine 163–proline 248.

This sequence belongs to the FKBP-type PPIase family. Tig subfamily.

Its subcellular location is the cytoplasm. It catalyses the reaction [protein]-peptidylproline (omega=180) = [protein]-peptidylproline (omega=0). Functionally, involved in protein export. Acts as a chaperone by maintaining the newly synthesized protein in an open conformation. Functions as a peptidyl-prolyl cis-trans isomerase. This is Trigger factor from Neisseria meningitidis serogroup C / serotype 2a (strain ATCC 700532 / DSM 15464 / FAM18).